Here is a 502-residue protein sequence, read N- to C-terminus: MNVFFTFSLLFLAALGSCADDRNPLEECFRETDYEEFLEIAKNGLSTTSNPKRVVIVGAGMSGLSAAYVLANAGHQVTVLEASERAGGRVKTYRNEKEGWYANLGPMRLPEKHRIVREYIRKFDLQLNEFSQENENAWYFIKNIRKRVGEVNKDPGVLEYPVKPSEVGKSAGQLYEESLQKAVEELRRTNCSYMLNKYDTYSTKEYLLKEGNLSPGAVDMIGDLLNEDSGYYVSFIESLKHDDIFAYEKRFDEIVGGMDKLPTSMYQAIQEKVHLNARVIKIQQDVKEVTVTYQTSEKETLSVTADYVIVCTTSRAARRIKFEPPLPPKKAHALRSVHYRSGTKIFLTCTKKFWEDDGIHGGKSTTDLPSRFIYYPNHNFPNGVGVIIAYGIGDDANYFQALDFEDCGDIVINDLSLIHQLPKEEIQAICRPSMIQRWSLDKYAMGGITTFTPYQFQHFSEALTAPVDRIYFAGEYTAQAHGWIDSTIKSGLRAARDVNSAS.

The signal sequence occupies residues 1 to 18 (MNVFFTFSLLFLAALGSC). The cysteines at positions 28 and 191 are disulfide-linked. Residues 61–62 (MS), 81–82 (EA), R89, and 105–108 (GPMR) contribute to the FAD site. Substrate is bound at residue R108. Residue N190 is glycosylated (N-linked (GlcNAc...) asparagine). H241 contributes to the substrate binding site. V279 contributes to the FAD binding site. A disulfide bridge connects residues C349 and C430. Y390 contributes to the substrate binding site. FAD is bound by residues E475 and 482 to 487 (GWIDST). Residue 482–483 (GW) participates in substrate binding.

Belongs to the flavin monoamine oxidase family. FIG1 subfamily. As to quaternary structure, homodimer; non-covalently linked. Requires FAD as cofactor. In terms of processing, N-glycosylated. The enzymatic activity is not affected by deglycosylation. As to expression, expressed by the venom gland.

The protein resides in the secreted. It catalyses the reaction an L-alpha-amino acid + O2 + H2O = a 2-oxocarboxylate + H2O2 + NH4(+). The catalysed reaction is L-leucine + O2 + H2O = 4-methyl-2-oxopentanoate + H2O2 + NH4(+). It carries out the reaction L-phenylalanine + O2 + H2O = 3-phenylpyruvate + H2O2 + NH4(+). The enzyme catalyses L-tryptophan + O2 + H2O = indole-3-pyruvate + H2O2 + NH4(+). It catalyses the reaction L-methionine + O2 + H2O = 4-methylsulfanyl-2-oxobutanoate + H2O2 + NH4(+). The catalysed reaction is L-isoleucine + O2 + H2O = (S)-3-methyl-2-oxopentanoate + H2O2 + NH4(+). It carries out the reaction L-histidine + O2 + H2O = 3-(imidazol-5-yl)pyruvate + H2O2 + NH4(+). The enzyme catalyses L-tyrosine + O2 + H2O = 3-(4-hydroxyphenyl)pyruvate + H2O2 + NH4(+). It catalyses the reaction L-alanine + O2 + H2O = pyruvate + H2O2 + NH4(+). The catalysed reaction is L-valine + O2 + H2O = 3-methyl-2-oxobutanoate + H2O2 + NH4(+). Its enzymatic activities is reduced when it is exposed to Ca(2+), Zn(2+), Al(3+), Cu(2+) or Ni(2+) salts. In terms of biological role, catalyzes an oxidative deamination of predominantly hydrophobic and aromatic L-amino acids, thus producing hydrogen peroxide that may contribute to the toxicity of the venom. Shows very high activity on L-Met, and L-Leu, high activity on L-Ile, L-Phe and L-Tyr and moderate activity on L-His, L-Val and L-Ala. Exhibits diverse biological activities, such as edema, apoptosis of tumor cell lines, antibacterial activities against both Gram-positive and Gram-negative bacteria, as well as induction of platelet aggregation. Effects of snake L-amino oxidases on platelets are controversial, since they either induce aggregation or inhibit agonist-induced aggregation. These different effects are probably due to different experimental conditions. Unlike other snake venom L-amino acid oxidases, does not induce hemorrhage. It may also induce hemolysis. Has parasiticidal activities against and leishmania, as a result of enzyme-catalyzed hydrogen peroxide production. The chain is L-amino-acid oxidase BmooLAAO-I from Bothrops moojeni (Lance-headed viper).